The following is a 287-amino-acid chain: MTGTKIDGKVISQSVKDRVKKAVEELKNQGINPCLATVLVGDNPASATYVRNKHRACEEVGITTKDHKLDASTTQAQLNEIIENLNNDNSVHGILVQLPLPEQLDEFTTTSRISPLKDVDGLTPHNAGLLAMKKAALVACTPSGVMEMFDYHGIELEGKNIVLINRSNLVGKPLYHLLLDKNATVITCHSRTKNLVELCQSADIIITAVGDRNKFTLTSDMIKEGAIVIDVAISRFQEKLVGDADYEDIIQKASFATPVPGGVGPMTVAMLLKNTITAASLSSQIGK.

NADP(+)-binding positions include 165–167, serine 190, and isoleucine 233; that span reads NRS.

Belongs to the tetrahydrofolate dehydrogenase/cyclohydrolase family. In terms of assembly, homodimer.

The catalysed reaction is (6R)-5,10-methylene-5,6,7,8-tetrahydrofolate + NADP(+) = (6R)-5,10-methenyltetrahydrofolate + NADPH. The enzyme catalyses (6R)-5,10-methenyltetrahydrofolate + H2O = (6R)-10-formyltetrahydrofolate + H(+). The protein operates within one-carbon metabolism; tetrahydrofolate interconversion. Its function is as follows. Catalyzes the oxidation of 5,10-methylenetetrahydrofolate to 5,10-methenyltetrahydrofolate and then the hydrolysis of 5,10-methenyltetrahydrofolate to 10-formyltetrahydrofolate. This chain is Bifunctional protein FolD, found in Nitrosopumilus maritimus (strain SCM1).